Consider the following 915-residue polypeptide: Clathrin coat assembly protein AP180 (915 aa).

One can recognise an ENTH domain in the interval 14–145; it reads QYSVTGSAVA…FSYRQMAFDF (132 aa). Disordered regions lie at residues 285-326, 391-425, and 497-522; these read LEGK…DTSP, SVPS…ATTA, and PETS…PSPA. Residues Ser-296, Ser-300, and Ser-306 each carry the phosphoserine modification. The span at 302–324 shows a compositional bias: polar residues; the sequence is LSKSSPATTVTSPNSTPAKTIDT. The O-linked (GlcNAc) threonine glycan is linked to Thr-310. Ser-313 bears the Phosphoserine mark. Phosphothreonine is present on Thr-317. Low complexity-rich tracts occupy residues 410–425 and 500–511; these read TTTT…ATTA and SAPVVTPTASTA. The span at 512–522 shows a compositional bias: pro residues; it reads PPVPATAPSPA. A phosphoserine mark is found at Ser-594, Ser-600, Pro-627, Ser-640, and Ser-646. Positions 720 to 735 are enriched in low complexity; the sequence is TTPSTSSSSSFDPSGD. Positions 720–765 are disordered; it reads TTPSTSSSSSFDPSGDLLMPTMAPSGQPAPVSMVPPSPAMSASKGL. Phosphoserine is present on Ser-775. A disordered region spans residues 817–855; it reads SAGVPPQGTVPPTSSVPPGAGAPSVGQPGAGYGMPPAGT. Position 873 is an asymmetric dimethylarginine; alternate (Arg-873). Omega-N-methylarginine; alternate is present on Arg-873. Residues 875 to 915 are disordered; that stretch reads PFGAAAVPGTQLSPSPTPATQSPKKPPAKDPLADLNIKDFL. The span at 884–896 shows a compositional bias: polar residues; sequence TQLSPSPTPATQS. Residues 901 to 915 show a composition bias toward basic and acidic residues; it reads PAKDPLADLNIKDFL.

The protein belongs to the PICALM/SNAP91 family. Binds AP2A2. Interacts with AP2B1; clathrin competes with SNAP91. In terms of processing, thr-310 can be modified by the addition of N-acetylglucosamine which can be further phosphorylated. The form with phosphorylated O-linked N-acetylglucosamine is predominant in brain synaptosomes. There is no evidence for direct Thr-310 phosphorylation.

Its subcellular location is the cell membrane. It is found in the membrane. It localises to the coated pit. In terms of biological role, adaptins are components of the adapter complexes which link clathrin to receptors in coated vesicles. Clathrin-associated protein complexes are believed to interact with the cytoplasmic tails of membrane proteins, leading to their selection and concentration. Binding of AP180 to clathrin triskelia induces their assembly into 60-70 nm coats. The polypeptide is Clathrin coat assembly protein AP180 (Snap91) (Rattus norvegicus (Rat)).